The sequence spans 365 residues: UPF0324 membrane protein Cj0999c (365 aa).

The next 11 helical transmembrane spans lie at I12–S34, H44–F63, L83–V100, F105–F127, S134–E153, G163–F185, A197–A219, V234–A256, S269–Y288, I303–Q325, and V338–F360.

Belongs to the UPF0324 family.

It is found in the cell membrane. In Campylobacter jejuni subsp. jejuni serotype O:2 (strain ATCC 700819 / NCTC 11168), this protein is UPF0324 membrane protein Cj0999c.